The sequence spans 604 residues: Glutamine--fructose-6-phosphate aminotransferase [isomerizing] (604 aa).

C2 functions as the Nucleophile; for GATase activity in the catalytic mechanism. The Glutamine amidotransferase type-2 domain maps to 2–218 (CGIVGVVGNT…DKELVIVKKD (217 aa)). 2 consecutive SIS domains span residues 284–423 (IIKS…ANGK) and 456–594 (VEQL…VDKP). The For Fru-6P isomerization activity role is filled by K599.

Homodimer.

It localises to the cytoplasm. It catalyses the reaction D-fructose 6-phosphate + L-glutamine = D-glucosamine 6-phosphate + L-glutamate. Its function is as follows. Catalyzes the first step in hexosamine metabolism, converting fructose-6P into glucosamine-6P using glutamine as a nitrogen source. The protein is Glutamine--fructose-6-phosphate aminotransferase [isomerizing] of Streptococcus agalactiae serotype V (strain ATCC BAA-611 / 2603 V/R).